The sequence spans 147 residues: Anti-sigma F factor (147 aa).

This sequence belongs to the anti-sigma-factor family.

It carries out the reaction L-seryl-[protein] + ATP = O-phospho-L-seryl-[protein] + ADP + H(+). The catalysed reaction is L-threonyl-[protein] + ATP = O-phospho-L-threonyl-[protein] + ADP + H(+). In terms of biological role, binds to sigma F and blocks its ability to form an RNA polymerase holoenzyme (E-sigma F). Phosphorylates SpoIIAA on a serine residue. This phosphorylation may enable SpoIIAA to act as an anti-anti-sigma factor that counteracts SpoIIAB and thus releases sigma F from inhibition. The polypeptide is Anti-sigma F factor (Priestia megaterium (Bacillus megaterium)).